We begin with the raw amino-acid sequence, 100 residues long: Small ribosomal subunit protein uS14c (100 aa).

The protein belongs to the universal ribosomal protein uS14 family. Part of the 30S ribosomal subunit.

The protein localises to the plastid. It localises to the chloroplast. Its function is as follows. Binds 16S rRNA, required for the assembly of 30S particles. This Aethionema cordifolium (Lebanon stonecress) protein is Small ribosomal subunit protein uS14c.